Consider the following 101-residue polypeptide: MLSLAHYLVLGAVLFAISIVGIFLNRKNVIVLLMAIELMLLAVNMNFVAFSHYLGDLAGQVFVFFILTVAAAESAIGLAILVVLFRNLDTINVDDLDSLKG.

The next 3 helical transmembrane spans lie at 4–24 (LAHYLVLGAVLFAISIVGIFL), 30–50 (IVLLMAIELMLLAVNMNFVAF), and 61–81 (VFVFFILTVAAAESAIGLAIL).

The protein belongs to the complex I subunit 4L family. NDH-1 is composed of 14 different subunits. Subunits NuoA, H, J, K, L, M, N constitute the membrane sector of the complex.

Its subcellular location is the cell inner membrane. The catalysed reaction is a quinone + NADH + 5 H(+)(in) = a quinol + NAD(+) + 4 H(+)(out). NDH-1 shuttles electrons from NADH, via FMN and iron-sulfur (Fe-S) centers, to quinones in the respiratory chain. The immediate electron acceptor for the enzyme in this species is believed to be ubiquinone. Couples the redox reaction to proton translocation (for every two electrons transferred, four hydrogen ions are translocated across the cytoplasmic membrane), and thus conserves the redox energy in a proton gradient. The protein is NADH-quinone oxidoreductase subunit K of Ralstonia nicotianae (strain ATCC BAA-1114 / GMI1000) (Ralstonia solanacearum).